Consider the following 260-residue polypeptide: Ribonuclease PH (260 aa).

Phosphate contacts are provided by residues Arg88 and 126 to 128 (GTR).

This sequence belongs to the RNase PH family. As to quaternary structure, homohexameric ring arranged as a trimer of dimers.

It carries out the reaction tRNA(n+1) + phosphate = tRNA(n) + a ribonucleoside 5'-diphosphate. Phosphorolytic 3'-5' exoribonuclease that plays an important role in tRNA 3'-end maturation. Removes nucleotide residues following the 3'-CCA terminus of tRNAs; can also add nucleotides to the ends of RNA molecules by using nucleoside diphosphates as substrates, but this may not be physiologically important. Probably plays a role in initiation of 16S rRNA degradation (leading to ribosome degradation) during starvation. The chain is Ribonuclease PH from Mycobacterium sp. (strain JLS).